The primary structure comprises 676 residues: Palmitoyl-CoA ligase FUM16 (676 aa).

An AMP-binding site is contributed by 245–256 (IMYTSGSTGLPN). The tract at residues 552–655 (KLESIYRTSQ…SGLVTPTMKL (104 aa)) is AMP-binding.

This sequence belongs to the ATP-dependent AMP-binding enzyme family.

It is found in the endoplasmic reticulum. It participates in mycotoxin biosynthesis. In terms of biological role, palmitoyl-CoA ligase; part of the gene cluster that mediates the biosynthesis of fumonisins B1 (FB1), B2 (FB2), B3 (FB3), and B4 (FB4), which are carcinogenic mycotoxins. Plays a role in the synthesis of ceramide and is involved in self-protection from fumonisin B1 toxicity. The biosynthesis starts with the FUM1-catalyzed carbon chain assembly from one molecule of acetyl-CoA, eight molecules of malonyl-CoA, and two molecules of methionine (in S-adenosyl form). The C18 polyketide chain is released from the enzyme by a nucleophilic attack of a carbanion, which is derived from R-carbon of alanine by decarboxylation, on the carbonyl carbon of polyketide acyl chain. This step is catalyzed by the pyridoxal 5'-phosphate-dependent aminoacyl transferase FUM8. The resultant 3-keto intermediate is then stereospecifically reduced to a 3-hydroxyl product by reductase FUM13. Subsequent oxidations at C-10 by the cytochrome P450 monooxygenase FUM2, C-14 and C-15 by FUM6, FUM12 or FUM15, tricarballylic esterification of the hydroxyl groups on C-14 and C-15 by acyltransferase FUM14, and C-5 hydroxylation by 2-keto-glutarate-dependent dioxygenase FUM3 furnish the biosynthesis of fumonisins. The tricarballylic moieties are most likely derived from the citric acid cycle, and their addition to the carbon backbone may involve FUM7, FUM10, FUM11 and FUM14. This chain is Palmitoyl-CoA ligase FUM16, found in Gibberella moniliformis (strain M3125 / FGSC 7600) (Maize ear and stalk rot fungus).